Reading from the N-terminus, the 139-residue chain is uncharacterized protein (139 aa).

3 consecutive transmembrane segments (helical) span residues 19-39 (CIIF…FILG), 64-84 (IFNV…FNLF), and 89-109 (AITI…WILG).

The protein localises to the cell membrane. This is an uncharacterized protein from Methanocaldococcus jannaschii (strain ATCC 43067 / DSM 2661 / JAL-1 / JCM 10045 / NBRC 100440) (Methanococcus jannaschii).